A 322-amino-acid polypeptide reads, in one-letter code: ATP-dependent 6-phosphofructokinase (322 aa).

Gly-13 is a binding site for ATP. 23 to 27 (RAVVR) lines the ADP pocket. ATP-binding positions include 74–75 (RC) and 104–107 (GDGS). Position 105 (Asp-105) interacts with Mg(2+). 127 to 129 (TID) provides a ligand contact to substrate. Catalysis depends on Asp-129, which acts as the Proton acceptor. An ADP-binding site is contributed by Arg-156. Substrate is bound by residues Arg-164 and 171–173 (MGR). ADP is bound by residues 187 to 189 (GAE) and 215 to 217 (KRH). Residues Glu-224, Arg-246, and 252–255 (HIQR) contribute to the substrate site.

Belongs to the phosphofructokinase type A (PFKA) family. ATP-dependent PFK group I subfamily. Prokaryotic clade 'B1' sub-subfamily. Homotetramer. It depends on Mg(2+) as a cofactor.

It localises to the cytoplasm. It carries out the reaction beta-D-fructose 6-phosphate + ATP = beta-D-fructose 1,6-bisphosphate + ADP + H(+). It participates in carbohydrate degradation; glycolysis; D-glyceraldehyde 3-phosphate and glycerone phosphate from D-glucose: step 3/4. Allosterically activated by ADP and other diphosphonucleosides, and allosterically inhibited by phosphoenolpyruvate. Its function is as follows. Catalyzes the phosphorylation of D-fructose 6-phosphate to fructose 1,6-bisphosphate by ATP, the first committing step of glycolysis. In Paenibacillus macquariensis (Bacillus macquariensis), this protein is ATP-dependent 6-phosphofructokinase.